The following is a 323-amino-acid chain: Prostaglandin-E(2) 9-reductase (323 aa).

Residues 23-24 (TY) and Asp-50 each bind NADP(+). Substrate is bound at residue Tyr-24. The active-site Proton donor is Tyr-55. His-117 is a substrate binding site. NADP(+)-binding positions include 166 to 167 (SN), Gln-190, 216 to 221 (YSALGS), and 270 to 280 (KSFTEKRIKEN).

Belongs to the aldo/keto reductase family.

It is found in the cytoplasm. It carries out the reaction prostaglandin F2alpha + NADP(+) = prostaglandin E2 + NADPH + H(+). It catalyses the reaction (17R,20S)-17,20-dihydroxypregn-4-en-3-one + NADP(+) = 17alpha-hydroxyprogesterone + NADPH + H(+). The enzyme catalyses (17R,20S)-17,20-dihydroxypregn-4-en-3-one + NAD(+) = 17alpha-hydroxyprogesterone + NADH + H(+). Can convert prostaglandin E2 to prostaglandin F2-alpha. The polypeptide is Prostaglandin-E(2) 9-reductase (AKR1C5) (Oryctolagus cuniculus (Rabbit)).